Reading from the N-terminus, the 435-residue chain is Glutamyl-tRNA reductase (435 aa).

Residues 49–52, serine 114, 119–121, and glutamine 125 each bind substrate; these read TCNR and EPQ. Cysteine 50 acts as the Nucleophile in catalysis. 204 to 209 lines the NADP(+) pocket; sequence GAGETI.

It belongs to the glutamyl-tRNA reductase family. In terms of assembly, homodimer.

It catalyses the reaction (S)-4-amino-5-oxopentanoate + tRNA(Glu) + NADP(+) = L-glutamyl-tRNA(Glu) + NADPH + H(+). The protein operates within porphyrin-containing compound metabolism; protoporphyrin-IX biosynthesis; 5-aminolevulinate from L-glutamyl-tRNA(Glu): step 1/2. Its function is as follows. Catalyzes the NADPH-dependent reduction of glutamyl-tRNA(Glu) to glutamate 1-semialdehyde (GSA). The chain is Glutamyl-tRNA reductase from Actinobacillus succinogenes (strain ATCC 55618 / DSM 22257 / CCUG 43843 / 130Z).